Reading from the N-terminus, the 481-residue chain is Abl interactor 1 (481 aa).

N-acetylalanine is present on A2. The interval 18–79 (ALIESYQNLT…NNVLQLLDIQ (62 aa)) is required for binding to WASF1. In terms of domain architecture, t-SNARE coiled-coil homology spans 45 to 107 (KALEETKAYT…DIHKEKVARR (63 aa)). Y53 is modified (phosphotyrosine). The disordered stretch occupies residues 158–285 (AKHGNNQPAR…PGAAPGSQYG (128 aa)). Residues 161 to 175 (GNNQPARTGTLSRTN) are compositionally biased toward polar residues. A phosphothreonine mark is found at T174 and T178. A phosphoserine mark is found at S183 and S187. Phosphotyrosine is present on Y213. Phosphothreonine is present on T215. A phosphoserine mark is found at S216, S222, and S225. The span at 222-235 (SQHSPGRTASLNQR) shows a compositional bias: polar residues. Low complexity-rich tracts occupy residues 248 to 258 (SRENSGSSSIG) and 272 to 282 (GPAAPGAAPGS). Phosphoserine is present on residues S292 and S296. Disordered regions lie at residues 318–348 (AQPH…LTPQ) and 361–392 (NIAD…PPPV). Pro residues-rich tracts occupy residues 366 to 376 (PTPPPPPPPDD) and 383 to 392 (SPPPPPPPPV). Residues 419–478 (NYIEKVVAIYDYTKDKDDELSFKEGAIIYVIKKNDDGWFEGVCNRVTGLFPGNYVESIMH) enclose the SH3 domain. A Phosphotyrosine modification is found at Y428. Position 439 is a phosphoserine (S439). T480 bears the Phosphothreonine mark.

The protein belongs to the ABI family. Interacts with ENAH, Abelson murine leukemia virus V-ABL, ABL1, STX1A, SNAP25, VAMP2, and through its N-terminus with WASF1. Part of a complex consisting of ABI1, STX1A and SNAP25. Part of a complex consisting of ABI1, EPS8 and SOS1. Interacts with EPS8, SOS1, SOS2, GRB2, SPTA1, and the first SH3 domain of NCK1. Component of the WAVE2 complex composed of ABI1, CYFIP1/SRA1, NCKAP1/NAP1 (NCKAP1l/HEM1 in hematopoietic cells) and WASF2/WAVE2. Interacts (via SH3 domain) with SHANK2 and SHANK3, but not SHANK1; the interaction is direct. Interacts with the heterodimer MYC:MAX; the interaction may enhance MYC:MAX transcriptional activity. Interacts with FNBP1L (via the SH3 domain), WASF2, and CDC42, but only in the presence of FNBP1L. In terms of processing, phosphorylated on tyrosine residues after serum stimulation or induction by v-Abl. Seems to be phosphorylated at Tyr-53 by ABL1, required for nuclear but not for synaptic localization. As to expression, widely expressed with highest levels in bone marrow, spleen, brain, testes, and embryonic brain. In adult brain prominently expressed in the neocortex, hippocampus and dentate gyrus.

Its subcellular location is the cytoplasm. It is found in the nucleus. The protein resides in the cell projection. The protein localises to the lamellipodium. It localises to the filopodium. Its subcellular location is the growth cone. It is found in the postsynaptic density. The protein resides in the cytoskeleton. Its function is as follows. May act in negative regulation of cell growth and transformation by interacting with nonreceptor tyrosine kinases ABL1 and/or ABL2. In vitro, at least isoform 2 and isoform 4 suppress the transforming activity of Abelson murine leukemia virus (v-Abl) after overexpression in fibroblasts. May play a role in regulation EGF-induced Erk pathway activation. Involved in cytoskeletal reorganization and EGFR signaling. Together with EPS8 participates in transduction of signals from Ras to Rac. In vitro, a trimeric complex of ABI1, EPS8 and SOS1 exhibits Rac specific guanine nucleotide exchange factor (GEF) activity and ABI1 seems to act as an adapter in the complex. Regulates ABL1/c-Abl-mediated phosphorylation of ENAH. Recruits WASF1 to lamellipodia and there seems to regulate WASF1 protein level. In brain, seems to regulate the dendritic outgrowth and branching as well as to determine the shape and number of synaptic contacts of developing neurons. The protein is Abl interactor 1 of Mus musculus (Mouse).